A 243-amino-acid chain; its full sequence is Vimentin A2 (243 aa).

The interval 1–22 (GFSLQDELDFLKKLHDEELADV) is coil 1B. In terms of domain architecture, IF rod spans 1–188 (GFSLQDELDF…KLLEGEESRI (188 aa)). The interval 23–45 (QAQIQDQQVQVDMDMAKPDLTAA) is linker 12. The segment at 46–184 (LRDVRLQYEN…ATYRKLLEGE (139 aa)) is coil 2. Residues 185 to 243 (ESRITTPLPNLSSFNLRDAILETKPILENTFSKKVLIKTIETRDGEVINESTQNHDDLE) form a tail region.

Belongs to the intermediate filament family. As to quaternary structure, homomer. In terms of processing, one of the most prominent phosphoproteins in various cells of mesenchymal origin. Phosphorylation is enhanced during cell division, at which time vimentin filaments are significantly reorganized. Expressed in low amounts in retina, optic nerve, and brain and in higher amounts in spinal cord.

In terms of biological role, vimentins are class-III intermediate filaments found in various non-epithelial cells, especially mesenchymal cells. Vimentin is attached to the nucleus, endoplasmic reticulum, and mitochondria, either laterally or terminally. The protein is Vimentin A2 of Carassius auratus (Goldfish).